The chain runs to 236 residues: Ubiquinone biosynthesis O-methyltransferase (236 aa).

S-adenosyl-L-methionine-binding residues include arginine 39, glycine 59, aspartate 80, and methionine 124.

It belongs to the methyltransferase superfamily. UbiG/COQ3 family.

The enzyme catalyses a 3-demethylubiquinol + S-adenosyl-L-methionine = a ubiquinol + S-adenosyl-L-homocysteine + H(+). It carries out the reaction a 3-(all-trans-polyprenyl)benzene-1,2-diol + S-adenosyl-L-methionine = a 2-methoxy-6-(all-trans-polyprenyl)phenol + S-adenosyl-L-homocysteine + H(+). It functions in the pathway cofactor biosynthesis; ubiquinone biosynthesis. O-methyltransferase that catalyzes the 2 O-methylation steps in the ubiquinone biosynthetic pathway. This chain is Ubiquinone biosynthesis O-methyltransferase, found in Shewanella baltica (strain OS223).